The primary structure comprises 78 residues: Small ribosomal subunit protein bS16c (78 aa).

The protein belongs to the bacterial ribosomal protein bS16 family.

It is found in the plastid. The protein resides in the chloroplast. In Daucus carota (Wild carrot), this protein is Small ribosomal subunit protein bS16c.